A 308-amino-acid chain; its full sequence is D-alanine--D-alanine ligase (308 aa).

Residues 109–302 (KAAYAAAGLP…FGALCRWIVE (194 aa)) enclose the ATP-grasp domain. 136 to 186 (MPPPYVIKPYNEGSSVGVYLVPEGAEAAPELADDLPDTLMVEAFVPGRELT) contributes to the ATP binding site. Positions 253, 269, and 271 each coordinate Mg(2+).

The protein belongs to the D-alanine--D-alanine ligase family. Requires Mg(2+) as cofactor. Mn(2+) is required as a cofactor.

Its subcellular location is the cytoplasm. It carries out the reaction 2 D-alanine + ATP = D-alanyl-D-alanine + ADP + phosphate + H(+). The protein operates within cell wall biogenesis; peptidoglycan biosynthesis. In terms of biological role, cell wall formation. This is D-alanine--D-alanine ligase from Dinoroseobacter shibae (strain DSM 16493 / NCIMB 14021 / DFL 12).